Here is a 286-residue protein sequence, read N- to C-terminus: Translocon-associated protein subunit alpha (286 aa).

The N-terminal stretch at 1–21 is a signal peptide; that stretch reads MRLLPRLLLLLLLVFPATVLL. Topologically, residues 22–207 are lumenal; sequence RGGPGGSLAE…EREDGLDGQT (186 aa). The disordered stretch occupies residues 28–83; the sequence is SLAEAQDLSEDEETVEDSVIEDEDDEAEVEEDEPTDLAEDREEEDVSGEPEASPSA. Residues 34 to 75 are compositionally biased toward acidic residues; sequence DLSEDEETVEDSVIEDEDDEAEVEEDEPTDLAEDREEEDVSG. Asn-136 and Asn-191 each carry an N-linked (GlcNAc...) asparagine glycan. The chain crosses the membrane as a helical span at residues 208 to 228; that stretch reads IFMYMSLAGLGLLVVVGLHQL. The Cytoplasmic segment spans residues 229–286; it reads LESRNRKRPIQKVEMGTSSQNDVDMSWIPQETLNQINKASPRRLPRKRPQKRSVGSDE. Ser-247 carries the post-translational modification Phosphoserine. Thr-260 is modified (phosphothreonine). The tract at residues 264–286 is disordered; the sequence is INKASPRRLPRKRPQKRSVGSDE. Ser-268 is subject to Phosphoserine. The segment covering 268–279 has biased composition (basic residues); sequence SPRRLPRKRPQK.

Belongs to the TRAP-alpha family. Heterotetramer of TRAP-alpha, TRAP-beta, TRAP-delta and TRAP-gamma. Interacts with palmitoylated calnexin (CALX), the interaction is required for efficient folding of glycosylated proteins. Post-translationally, phosphorylated in its cytoplasmic tail.

Its subcellular location is the endoplasmic reticulum membrane. Its function is as follows. TRAP proteins are part of a complex whose function is to bind calcium to the ER membrane and thereby regulate the retention of ER resident proteins. May be involved in the recycling of the translocation apparatus after completion of the translocation process or may function as a membrane-bound chaperone facilitating folding of translocated proteins. The chain is Translocon-associated protein subunit alpha (SSR1) from Oryctolagus cuniculus (Rabbit).